The following is a 122-amino-acid chain: Large ribosomal subunit protein bL12 (122 aa).

Belongs to the bacterial ribosomal protein bL12 family. As to quaternary structure, homodimer. Part of the ribosomal stalk of the 50S ribosomal subunit. Forms a multimeric L10(L12)X complex, where L10 forms an elongated spine to which 2 to 4 L12 dimers bind in a sequential fashion. Binds GTP-bound translation factors.

Functionally, forms part of the ribosomal stalk which helps the ribosome interact with GTP-bound translation factors. Is thus essential for accurate translation. The sequence is that of Large ribosomal subunit protein bL12 from Enterococcus faecalis (strain ATCC 700802 / V583).